A 371-amino-acid polypeptide reads, in one-letter code: Dihydroorotate dehydrogenase (quinone) (371 aa).

FMN is bound by residues 79 to 83 (AGFDK) and Thr103. Lys83 contacts substrate. 128–132 (NRMGF) contributes to the substrate binding site. FMN is bound by residues Asn156 and Asn189. Residue Asn189 participates in substrate binding. Catalysis depends on Ser192, which acts as the Nucleophile. Asn194 contributes to the substrate binding site. Positions 225 and 253 each coordinate FMN. Residue 254-255 (NT) coordinates substrate. Residues Gly279, Gly308, and 329–330 (YT) each bind FMN.

The protein belongs to the dihydroorotate dehydrogenase family. Type 2 subfamily. As to quaternary structure, monomer. The cofactor is FMN.

Its subcellular location is the cell membrane. The catalysed reaction is (S)-dihydroorotate + a quinone = orotate + a quinol. Its pathway is pyrimidine metabolism; UMP biosynthesis via de novo pathway; orotate from (S)-dihydroorotate (quinone route): step 1/1. Its function is as follows. Catalyzes the conversion of dihydroorotate to orotate with quinone as electron acceptor. This Corynebacterium glutamicum (strain R) protein is Dihydroorotate dehydrogenase (quinone).